The sequence spans 618 residues: Mitochondrial Rho GTPase 2 (618 aa).

Residues 1 to 592 (MRRDVRILLL…ELHPSSFWLR (592 aa)) lie on the Cytoplasmic side of the membrane. The region spanning 2–168 (RRDVRILLLG…FYYAQKAVLH (167 aa)) is the Miro 1 domain. 4 residues coordinate GTP: glycine 16, lysine 17, threonine 18, and serine 19. Threonine 18 contributes to the Mg(2+) binding site. Mg(2+)-binding residues include proline 35 and aspartate 57. Residue serine 59 coordinates GTP. Lysine 96 is covalently cross-linked (Glycyl lysine isopeptide (Lys-Gly) (interchain with G-Cter in ubiquitin)). Residues asparagine 118, lysine 119, aspartate 121, alanine 149, and lysine 150 each coordinate GTP. Lysine 119 participates in a covalent cross-link: Glycyl lysine isopeptide (Lys-Gly) (interchain with G-Cter in ubiquitin). Residue lysine 164 forms a Glycyl lysine isopeptide (Lys-Gly) (interchain with G-Cter in ubiquitin) linkage. 2 EF-hand domains span residues 184 to 219 (ACAQ…CFGH) and 304 to 339 (LGYQ…FPAA). The Ca(2+) site is built by aspartate 197, aspartate 199, aspartate 201, glutamate 208, aspartate 317, aspartate 319, aspartate 321, and glutamate 328. The Miro 2 domain occupies 414 to 576 (RSVLLCKVVG…FTQLATMAAF (163 aa)). GTP-binding residues include glycine 426, glycine 428, lysine 429, serine 430, and alanine 431. The GDP site is built by glycine 426, glycine 428, lysine 429, serine 430, and alanine 431. Serine 430 is a binding site for Mg(2+). Residue glutamate 471 coordinates Mg(2+). GTP contacts are provided by lysine 525, aspartate 527, and cysteine 556. The GDP site is built by lysine 525, aspartate 527, and cysteine 556. The helical; Anchor for type IV membrane protein transmembrane segment at 593 to 615 (GLLGVVGAAVAAVLSFSLYRVLV) threads the bilayer. Topologically, residues 616–618 (KSQ) are mitochondrial intermembrane.

The protein belongs to the mitochondrial Rho GTPase family. As to quaternary structure, homodimer. Interacts with the kinesin-binding proteins TRAK1/OIP106 and TRAK2/GRIF1, forming a link between mitochondria and the trafficking apparatus of the microtubules. Interacts with ARMCX3. Found in a complex with KIF5B, OGT, RHOT1 and TRAK1. In terms of processing, ubiquitinated by PRKN in a PINK1-dependent manner, leading to its degradation. Ubiquitously expressed. Highly expressed in heart, liver, skeletal muscle, kidney and pancreas.

It localises to the mitochondrion outer membrane. It carries out the reaction GTP + H2O = GDP + phosphate + H(+). The catalysed reaction is ATP + H2O = ADP + phosphate + H(+). It catalyses the reaction UTP + H2O = UDP + phosphate + H(+). Its function is as follows. Atypical mitochondrial nucleoside-triphosphatase (NTPase) involved in mitochondrial trafficking. Probably involved in control of anterograde transport of mitochondria and their subcellular distribution. Can hydrolyze GTP. Can hydrolyze ATP and UTP. The polypeptide is Mitochondrial Rho GTPase 2 (RHOT2) (Homo sapiens (Human)).